Reading from the N-terminus, the 439-residue chain is Adenylosuccinate synthetase (439 aa).

GTP contacts are provided by residues 12 to 18 and 40 to 42; these read GDEGKGK and GHT. Asp13 serves as the catalytic Proton acceptor. Asp13 and Gly40 together coordinate Mg(2+). Residues 13–16, 38–41, Thr137, Arg151, Gln232, Thr247, and Arg311 each bind IMP; these read DEGK and NAGH. The Proton donor role is filled by His41. 307–313 serves as a coordination point for substrate; that stretch reads ATTGRPR. GTP is bound by residues Arg313, 339 to 341, and 421 to 423; these read KLD and SNG.

Belongs to the adenylosuccinate synthetase family. As to quaternary structure, homodimer. Mg(2+) serves as cofactor.

Its subcellular location is the cytoplasm. It carries out the reaction IMP + L-aspartate + GTP = N(6)-(1,2-dicarboxyethyl)-AMP + GDP + phosphate + 2 H(+). The protein operates within purine metabolism; AMP biosynthesis via de novo pathway; AMP from IMP: step 1/2. Its function is as follows. Plays an important role in the de novo pathway of purine nucleotide biosynthesis. Catalyzes the first committed step in the biosynthesis of AMP from IMP. The protein is Adenylosuccinate synthetase of Salinibacter ruber (strain DSM 13855 / M31).